Reading from the N-terminus, the 249-residue chain is 5'-nucleotidase SurE (249 aa).

D9, D10, S40, and N92 together coordinate a divalent metal cation.

This sequence belongs to the SurE nucleotidase family. It depends on a divalent metal cation as a cofactor.

Its subcellular location is the cytoplasm. The enzyme catalyses a ribonucleoside 5'-phosphate + H2O = a ribonucleoside + phosphate. Functionally, nucleotidase that shows phosphatase activity on nucleoside 5'-monophosphates. In Shewanella sp. (strain ANA-3), this protein is 5'-nucleotidase SurE.